A 176-amino-acid chain; its full sequence is MSNTMQGAHYPQMAFDPTWQMHPAYATATAFNPYNVSFDFTRSPNTSGGSDESMSDGSKIDPKRSPKYLEKRMKNNEAAKKSRASRKHREQKNQTENELLKRKNAALEEELKQAKCELAQMQITIRDMSIEREAYRRENEMLKMVNNKFADSKFEPPQPLRDMTNCNLPYKYELLS.

The tract at residues 44 to 101 (PNTSGGSDESMSDGSKIDPKRSPKYLEKRMKNNEAAKKSRASRKHREQKNQTENELLK) is disordered. Positions 47–57 (SGGSDESMSDG) are enriched in low complexity. Residues 58 to 80 (SKIDPKRSPKYLEKRMKNNEAAK) are compositionally biased toward basic and acidic residues. The bZIP domain maps to 65–128 (SPKYLEKRMK…AQMQITIRDM (64 aa)). Positions 67–92 (KYLEKRMKNNEAAKKSRASRKHREQK) are basic motif. Basic residues predominate over residues 81-90 (KSRASRKHRE). Basic and acidic residues predominate over residues 91 to 101 (QKNQTENELLK). Residues 100–107 (LKRKNAAL) form a leucine-zipper region.

This sequence belongs to the bZIP family.

The polypeptide is bZIP transcription factor 8 (zip-8) (Caenorhabditis elegans).